The sequence spans 360 residues: MTTTLERRESASFWEQFCAWITSTENRLYIGWFGCLMFPTLLSAISAYIIAFIAAPPVDIDGIREPVAGSLLYGNNIISGAVVPSSNAIGVHFYPIWEAASIDEWLYNGGTYQLVVLHFFIGVCAYIGREWELSYRLGMRPWICVAFSAPVAAAAAVFVIYPIGQGSFSDGMPLGISGTFNFMLVFQAEHNILMHPFHMLGVAGVFGGSLFSAMHGSLVTSSLIRETTENESANYGYKFGQEEETYNIVAAHGYFGRLIFQYASFNNSRALHFFLGAWPVVGIWFTAMGVATMAFNLNGFNFNQSVVDSQGRVINTWADILNRSNLGMEVMHERNAHNFPLDLAAGESLPVALVAPAVAA.

The next 3 helical transmembrane spans lie at 29 to 46 (YIGW…SAIS), 118 to 133 (HFFI…EWEL), and 142 to 156 (WICV…AAAA). Histidine 118 lines the chlorophyll a pocket. Tyrosine 126 serves as a coordination point for pheophytin a. Residues aspartate 170 and glutamate 189 each contribute to the [CaMn4O5] cluster site. The chain crosses the membrane as a helical span at residues 197–218 (FHMLGVAGVFGGSLFSAMHGSL). Histidine 198 lines the chlorophyll a pocket. A quinone-binding positions include histidine 215 and 264 to 265 (SF). Residue histidine 215 coordinates Fe cation. A Fe cation-binding site is contributed by histidine 272. Residues 274–288 (FLGAWPVVGIWFTAM) traverse the membrane as a helical segment. [CaMn4O5] cluster contacts are provided by histidine 332, glutamate 333, aspartate 342, and alanine 344. The propeptide occupies 345 to 360 (AGESLPVALVAPAVAA).

This sequence belongs to the reaction center PufL/M/PsbA/D family. As to quaternary structure, PSII is composed of 1 copy each of membrane proteins PsbA, PsbB, PsbC, PsbD, PsbE, PsbF, PsbH, PsbI, PsbJ, PsbK, PsbL, PsbM, PsbT, PsbX, PsbY, PsbZ, Psb30/Ycf12, at least 3 peripheral proteins of the oxygen-evolving complex and a large number of cofactors. It forms dimeric complexes. The cofactor is The D1/D2 heterodimer binds P680, chlorophylls that are the primary electron donor of PSII, and subsequent electron acceptors. It shares a non-heme iron and each subunit binds pheophytin, quinone, additional chlorophylls, carotenoids and lipids. D1 provides most of the ligands for the Mn4-Ca-O5 cluster of the oxygen-evolving complex (OEC). There is also a Cl(-1) ion associated with D1 and D2, which is required for oxygen evolution. The PSII complex binds additional chlorophylls, carotenoids and specific lipids.. In terms of processing, tyr-161 forms a radical intermediate that is referred to as redox-active TyrZ, YZ or Y-Z. C-terminally processed by CTPA; processing is essential to allow assembly of the oxygen-evolving complex and thus photosynthetic growth.

The protein localises to the plastid. The protein resides in the chloroplast thylakoid membrane. It carries out the reaction 2 a plastoquinone + 4 hnu + 2 H2O = 2 a plastoquinol + O2. Photosystem II (PSII) is a light-driven water:plastoquinone oxidoreductase that uses light energy to abstract electrons from H(2)O, generating O(2) and a proton gradient subsequently used for ATP formation. It consists of a core antenna complex that captures photons, and an electron transfer chain that converts photonic excitation into a charge separation. The D1/D2 (PsbA/PsbD) reaction center heterodimer binds P680, the primary electron donor of PSII as well as several subsequent electron acceptors. This Emiliania huxleyi (Coccolithophore) protein is Photosystem II protein D1.